We begin with the raw amino-acid sequence, 150 residues long: 6,7-dimethyl-8-ribityllumazine synthase (150 aa).

Residues Phe11, 42–44, and 73–75 contribute to the 5-amino-6-(D-ribitylamino)uracil site; these read IFE and CAI. Position 78–79 (78–79) interacts with (2S)-2-hydroxy-3-oxobutyl phosphate; that stretch reads ES. The Proton donor role is filled by His81. 5-amino-6-(D-ribitylamino)uracil is bound at residue Asn106. Arg120 is a binding site for (2S)-2-hydroxy-3-oxobutyl phosphate.

This sequence belongs to the DMRL synthase family.

It catalyses the reaction (2S)-2-hydroxy-3-oxobutyl phosphate + 5-amino-6-(D-ribitylamino)uracil = 6,7-dimethyl-8-(1-D-ribityl)lumazine + phosphate + 2 H2O + H(+). The protein operates within cofactor biosynthesis; riboflavin biosynthesis; riboflavin from 2-hydroxy-3-oxobutyl phosphate and 5-amino-6-(D-ribitylamino)uracil: step 1/2. Catalyzes the formation of 6,7-dimethyl-8-ribityllumazine by condensation of 5-amino-6-(D-ribitylamino)uracil with 3,4-dihydroxy-2-butanone 4-phosphate. This is the penultimate step in the biosynthesis of riboflavin. This chain is 6,7-dimethyl-8-ribityllumazine synthase, found in Paramagnetospirillum magneticum (strain ATCC 700264 / AMB-1) (Magnetospirillum magneticum).